The sequence spans 217 residues: Probable nicotinate-nucleotide adenylyltransferase (217 aa).

This sequence belongs to the NadD family.

It catalyses the reaction nicotinate beta-D-ribonucleotide + ATP + H(+) = deamido-NAD(+) + diphosphate. It functions in the pathway cofactor biosynthesis; NAD(+) biosynthesis; deamido-NAD(+) from nicotinate D-ribonucleotide: step 1/1. In terms of biological role, catalyzes the reversible adenylation of nicotinate mononucleotide (NaMN) to nicotinic acid adenine dinucleotide (NaAD). The chain is Probable nicotinate-nucleotide adenylyltransferase from Dechloromonas aromatica (strain RCB).